The following is an 89-amino-acid chain: UPF0237 protein DIP1286 (89 aa).

The ACT domain occupies 4–78 (IISVTGADHT…KDQNLVIRIQ (75 aa)).

Belongs to the UPF0237 family.

The chain is UPF0237 protein DIP1286 from Corynebacterium diphtheriae (strain ATCC 700971 / NCTC 13129 / Biotype gravis).